The chain runs to 190 residues: Peptide deformylase (190 aa).

Fe cation contacts are provided by Cys94 and His136. The active site involves Glu137. Residue His140 coordinates Fe cation.

This sequence belongs to the polypeptide deformylase family. It depends on Fe(2+) as a cofactor.

It carries out the reaction N-terminal N-formyl-L-methionyl-[peptide] + H2O = N-terminal L-methionyl-[peptide] + formate. Its function is as follows. Removes the formyl group from the N-terminal Met of newly synthesized proteins. Requires at least a dipeptide for an efficient rate of reaction. N-terminal L-methionine is a prerequisite for activity but the enzyme has broad specificity at other positions. The chain is Peptide deformylase from Chlorobium phaeovibrioides (strain DSM 265 / 1930) (Prosthecochloris vibrioformis (strain DSM 265)).